The primary structure comprises 295 residues: MSLKHFIQITKPGIIFGNVLSVAGGFFLASKGNIDFGVFLAAVIGTSLVVASGCVFNNCIDRDIDQRMERTRNRVLVQGLVSLKLALLYATLLGIAGVALLYTEANPLAALFAVIGFVIYVGFYSLYLKRRSVHGTLVGSLSGAMPPVIGYCAVSNSFDFAALTLLVMFSLWQMPHSYAIAIFRFNDYRAAKIPVLPVQRGILVTKRHILLYILAFLVATLMLTVGGYAGLNYLAVAAGMGMYWLYMAWKGYKAVDDTVWARKLFVFSIFTITALSVMMSVDFQVTKELLVTYAF.

9 consecutive transmembrane segments (helical) span residues 9–29 (ITKP…FFLA), 36–56 (FGVF…GCVF), 80–100 (LVSL…GVAL), 108–128 (LAAL…SLYL), 135–155 (GTLV…CAVS), 163–183 (LTLL…IAIF), 209–229 (ILLY…GGYA), 230–250 (GLNY…MAWK), and 265–285 (FVFS…DFQV).

This sequence belongs to the UbiA prenyltransferase family. Protoheme IX farnesyltransferase subfamily.

It localises to the cell inner membrane. It carries out the reaction heme b + (2E,6E)-farnesyl diphosphate + H2O = Fe(II)-heme o + diphosphate. It participates in porphyrin-containing compound metabolism; heme O biosynthesis; heme O from protoheme: step 1/1. In terms of biological role, converts heme B (protoheme IX) to heme O by substitution of the vinyl group on carbon 2 of heme B porphyrin ring with a hydroxyethyl farnesyl side group. The sequence is that of Protoheme IX farnesyltransferase from Pseudomonas syringae pv. tomato (strain ATCC BAA-871 / DC3000).